The chain runs to 365 residues: Eukaryotic translation initiation factor 3 subunit H (365 aa).

The region spanning 11-160 (VKVDALVVMK…LRAFRLSSKF (150 aa)) is the MPN domain.

Belongs to the eIF-3 subunit H family. In terms of assembly, component of the eukaryotic translation initiation factor 3 (eIF-3) complex.

The protein resides in the cytoplasm. Its function is as follows. Component of the eukaryotic translation initiation factor 3 (eIF-3) complex, which is involved in protein synthesis of a specialized repertoire of mRNAs and, together with other initiation factors, stimulates binding of mRNA and methionyl-tRNAi to the 40S ribosome. The eIF-3 complex specifically targets and initiates translation of a subset of mRNAs involved in cell proliferation. The chain is Eukaryotic translation initiation factor 3 subunit H from Aspergillus oryzae (strain ATCC 42149 / RIB 40) (Yellow koji mold).